We begin with the raw amino-acid sequence, 108 residues long: Nucleoid-associated protein BamMC406_1737 (108 aa).

Positions 85-95 (ATSQEKMSGMT) are enriched in polar residues. The tract at residues 85–108 (ATSQEKMSGMTSGLPLPPGFKLPF) is disordered. Positions 99 to 108 (PLPPGFKLPF) are enriched in pro residues.

This sequence belongs to the YbaB/EbfC family. As to quaternary structure, homodimer.

It localises to the cytoplasm. It is found in the nucleoid. In terms of biological role, binds to DNA and alters its conformation. May be involved in regulation of gene expression, nucleoid organization and DNA protection. The protein is Nucleoid-associated protein BamMC406_1737 of Burkholderia ambifaria (strain MC40-6).